The sequence spans 543 residues: Carboxypeptidase Y homolog A (543 aa).

A signal peptide spans 1-17 (MKVATSALLVGAVSASV). Residues 18–128 (GPQQQVLKFP…KLENYSMRTK (111 aa)) constitute a propeptide that is removed on maturation. Residues Asn-122 and Asn-213 are each glycosylated (N-linked (GlcNAc...) asparagine). 5 disulfide bridges follow: Cys-182-Cys-421, Cys-316-Cys-330, Cys-340-Cys-363, Cys-347-Cys-356, and Cys-385-Cys-391. Ser-269 is an active-site residue. Asp-460 is an active-site residue. Asn-508 carries an N-linked (GlcNAc...) asparagine glycan. His-519 is a catalytic residue.

Belongs to the peptidase S10 family.

The protein localises to the vacuole. The enzyme catalyses Release of a C-terminal amino acid with broad specificity.. In terms of biological role, vacuolar carboxypeptidase involved in degradation of small peptides. Digests preferentially peptides containing an aliphatic or hydrophobic residue in P1' position, as well as methionine, leucine or phenylalanine in P1 position of ester substrate. This Leptosphaeria maculans (strain JN3 / isolate v23.1.3 / race Av1-4-5-6-7-8) (Blackleg fungus) protein is Carboxypeptidase Y homolog A (CPYA).